Reading from the N-terminus, the 270-residue chain is Thiazole synthase (270 aa).

Lysine 111 acts as the Schiff-base intermediate with DXP in catalysis. Residues glycine 172, 198 to 199 (AG), and 220 to 221 (NS) contribute to the 1-deoxy-D-xylulose 5-phosphate site. The tract at residues 249-270 (AGRLPTRAQASPSSPTTGKVND) is disordered. A compositionally biased stretch (polar residues) spans 256–270 (AQASPSSPTTGKVND).

Belongs to the ThiG family. In terms of assembly, homotetramer. Forms heterodimers with either ThiH or ThiS.

Its subcellular location is the cytoplasm. The catalysed reaction is [ThiS sulfur-carrier protein]-C-terminal-Gly-aminoethanethioate + 2-iminoacetate + 1-deoxy-D-xylulose 5-phosphate = [ThiS sulfur-carrier protein]-C-terminal Gly-Gly + 2-[(2R,5Z)-2-carboxy-4-methylthiazol-5(2H)-ylidene]ethyl phosphate + 2 H2O + H(+). It functions in the pathway cofactor biosynthesis; thiamine diphosphate biosynthesis. Catalyzes the rearrangement of 1-deoxy-D-xylulose 5-phosphate (DXP) to produce the thiazole phosphate moiety of thiamine. Sulfur is provided by the thiocarboxylate moiety of the carrier protein ThiS. In vitro, sulfur can be provided by H(2)S. The protein is Thiazole synthase of Synechococcus sp. (strain WH7803).